A 288-amino-acid chain; its full sequence is 4-diphosphocytidyl-2-C-methyl-D-erythritol kinase (288 aa).

Lys8 is an active-site residue. An ATP-binding site is contributed by 92 to 102; sequence PVAAGMAGGST. Residue Asp134 is part of the active site.

The protein belongs to the GHMP kinase family. IspE subfamily.

It catalyses the reaction 4-CDP-2-C-methyl-D-erythritol + ATP = 4-CDP-2-C-methyl-D-erythritol 2-phosphate + ADP + H(+). The protein operates within isoprenoid biosynthesis; isopentenyl diphosphate biosynthesis via DXP pathway; isopentenyl diphosphate from 1-deoxy-D-xylulose 5-phosphate: step 3/6. Functionally, catalyzes the phosphorylation of the position 2 hydroxy group of 4-diphosphocytidyl-2C-methyl-D-erythritol. In Clostridium perfringens (strain ATCC 13124 / DSM 756 / JCM 1290 / NCIMB 6125 / NCTC 8237 / Type A), this protein is 4-diphosphocytidyl-2-C-methyl-D-erythritol kinase.